The chain runs to 275 residues: 2'-N-acetylparomamine deacetylase (275 aa).

His-14, Asp-17, and His-166 together coordinate Zn(2+).

The protein belongs to the PIGL family. Zn(2+) serves as cofactor.

The enzyme catalyses 2'-N-acetylparomamine + H2O = paromamine + acetate. Its pathway is antibiotic biosynthesis; butirosin biosynthesis. In terms of biological role, deacetylase involved in the biosynthesis of butirosin by mediating deacetylation of 2'-N-acetylparomamine. The protein is 2'-N-acetylparomamine deacetylase (btrD) of Niallia circulans (Bacillus circulans).